Consider the following 141-residue polypeptide: UPF0225 protein Rmet_0111 (141 aa).

It belongs to the UPF0225 family.

The protein is UPF0225 protein Rmet_0111 of Cupriavidus metallidurans (strain ATCC 43123 / DSM 2839 / NBRC 102507 / CH34) (Ralstonia metallidurans).